The chain runs to 223 residues: Ribonuclease 3 (223 aa).

In terms of domain architecture, RNase III spans 4 to 127; that stretch reads LENLQKLLGY…VMGAVYLEAG (124 aa). Glu-40 serves as a coordination point for Mg(2+). Residue Asp-44 is part of the active site. Mg(2+) is bound by residues Asp-113 and Glu-116. The active site involves Glu-116. The DRBM domain occupies 154 to 223; sequence DYKTALQEIT…AKIALEKMKK (70 aa).

Belongs to the ribonuclease III family. Homodimer. The cofactor is Mg(2+).

It localises to the cytoplasm. It carries out the reaction Endonucleolytic cleavage to 5'-phosphomonoester.. Digests double-stranded RNA. Involved in the processing of primary rRNA transcript to yield the immediate precursors to the large and small rRNAs (23S and 16S). Processes some mRNAs, and tRNAs when they are encoded in the rRNA operon. Processes pre-crRNA and tracrRNA of type II CRISPR loci if present in the organism. This chain is Ribonuclease 3, found in Campylobacter curvus (strain 525.92).